Reading from the N-terminus, the 555-residue chain is Developmental regulatory protein wetA (555 aa).

4 disordered regions span residues threonine 113–serine 171, glutamine 250–leucine 310, threonine 419–lysine 488, and glycine 508–lysine 531. Polar residues-rich tracts occupy residues glutamine 162–serine 171, proline 259–threonine 281, serine 293–leucine 310, threonine 419–isoleucine 431, and serine 464–lysine 488.

Belongs to the wetA family.

Its function is as follows. BrlA, abaA and wetA are pivotal regulators of conidiophore development and conidium maturation. They act individually and together to regulate their own expression and that of numerous other sporulation-specific genes. Responsible for activating a set of genes whose products make up the final two conidial wall layers or direct their assembly and, through this activity, is responsible for acquisition of spore dormancy. The chain is Developmental regulatory protein wetA from Emericella nidulans (strain FGSC A4 / ATCC 38163 / CBS 112.46 / NRRL 194 / M139) (Aspergillus nidulans).